A 106-amino-acid polypeptide reads, in one-letter code: uncharacterized protein (106 aa).

A run of 2 helical transmembrane segments spans residues 10 to 30 (VYIQMVAFSPYRIVLPFVAFV) and 65 to 85 (LDFASAFVVPAASFVESLLAY).

The protein resides in the membrane. This is an uncharacterized protein from Saccharomyces cerevisiae (strain ATCC 204508 / S288c) (Baker's yeast).